We begin with the raw amino-acid sequence, 379 residues long: Chorismate synthase (379 aa).

2 residues coordinate NADP(+): R48 and R54. Residues 125-127 (RSS), 241-242 (NA), G286, 301-305 (KPTSS), and R327 each bind FMN.

The protein belongs to the chorismate synthase family. As to quaternary structure, homotetramer. It depends on FMNH2 as a cofactor.

The enzyme catalyses 5-O-(1-carboxyvinyl)-3-phosphoshikimate = chorismate + phosphate. It participates in metabolic intermediate biosynthesis; chorismate biosynthesis; chorismate from D-erythrose 4-phosphate and phosphoenolpyruvate: step 7/7. Functionally, catalyzes the anti-1,4-elimination of the C-3 phosphate and the C-6 proR hydrogen from 5-enolpyruvylshikimate-3-phosphate (EPSP) to yield chorismate, which is the branch point compound that serves as the starting substrate for the three terminal pathways of aromatic amino acid biosynthesis. This reaction introduces a second double bond into the aromatic ring system. The polypeptide is Chorismate synthase (Rhodospirillum centenum (strain ATCC 51521 / SW)).